The sequence spans 238 residues: 7-cyano-7-deazaguanine synthase (238 aa).

14-24 (FSGGQDSATCL) contacts ATP. 4 residues coordinate Zn(2+): Cys-202, Cys-217, Cys-220, and Cys-223.

Belongs to the QueC family. It depends on Zn(2+) as a cofactor.

The catalysed reaction is 7-carboxy-7-deazaguanine + NH4(+) + ATP = 7-cyano-7-deazaguanine + ADP + phosphate + H2O + H(+). It participates in purine metabolism; 7-cyano-7-deazaguanine biosynthesis. Catalyzes the ATP-dependent conversion of 7-carboxy-7-deazaguanine (CDG) to 7-cyano-7-deazaguanine (preQ(0)). This Nitrobacter hamburgensis (strain DSM 10229 / NCIMB 13809 / X14) protein is 7-cyano-7-deazaguanine synthase.